Consider the following 154-residue polypeptide: MGVGLSTLEQKLTEIISAPVEALGYELVGIEFIRGRQSTLRIYIDSDDGITVDACADVSHQVSAVLDVEDPITVAYNLEVSSPGLDRPMFTAEHYTRYLGEEVTLVLRMAMQNRRKWQGIIKAVDGEMITVTVDGKDEVFALSNIQKANLVPHF.

This sequence belongs to the RimP family.

It localises to the cytoplasm. In terms of biological role, required for maturation of 30S ribosomal subunits. This chain is Ribosome maturation factor RimP, found in Yersinia pseudotuberculosis serotype O:1b (strain IP 31758).